The primary structure comprises 555 residues: Bifunctional epoxide hydrolase 2 (555 aa).

The segment at 1–224 (MALRAAVFDL…KVTGVQLLQT (224 aa)) is phosphatase. Residues Asp9 and Asp11 each contribute to the Mg(2+) site. N6-acetyllysine is present on Lys43. 123–124 (TN) is a binding site for phosphate. Residue Asp185 participates in Mg(2+) binding. 2 positions are modified to N6-acetyllysine: Lys191 and Lys215. The epoxide hydrolase stretch occupies residues 235–555 (SALSHGYVLI…ARNPLVDSKL (321 aa)). An AB hydrolase-1 domain is found at 259–531 (PAVCLCHGFP…CGHWTQIDKP (273 aa)). Asp335 acts as the Nucleophile in catalysis. Phosphoserine is present on Ser370. Tyr383 serves as a coordination point for substrate. The residue at position 455 (Lys455) is an N6-succinyllysine. Tyr466 acts as the Proton donor in catalysis. Lys505 is subject to N6-succinyllysine. Cys522 carries S-(15-deoxy-Delta12,14-prostaglandin J2-9-yl)cysteine lipidation. His524 serves as the catalytic Proton acceptor. Positions 553–555 (SKL) match the Microbody targeting signal motif. Lys554 carries the N6-succinyllysine modification.

The protein belongs to the AB hydrolase superfamily. Epoxide hydrolase family. In terms of assembly, homodimer. The cofactor is Mg(2+). Post-translationally, the covalent modification of cysteine by 15-deoxy-Delta12,14-prostaglandin-J2 is autocatalytic and reversible. It may occur as an alternative to other cysteine modifications, such as S-nitrosylation and S-palmitoylation.

It is found in the cytoplasm. The protein localises to the peroxisome. The enzyme catalyses an epoxide + H2O = an ethanediol. It carries out the reaction (9S,10S)-10-hydroxy-9-(phosphooxy)octadecanoate + H2O = (9S,10S)-9,10-dihydroxyoctadecanoate + phosphate. It catalyses the reaction (14R,15S)-epoxy-(5Z,8Z,11Z)-eicosatrienoate + H2O = (14R,15R)-dihydroxy-(5Z,8Z,11Z)-eicosatrienoate. Inhibited by 1-(1-acetylpiperidin-4-yl)-3-(4-(trifl uoromethoxy)phenyl)urea (TPAU), 1-cyclohexyl-3-dodecylurea (CDU), 12-(3-adamantan-1-yl-ureido)-dodecanoic acid (AUDA), 1-((3S, 5S, 7S)-adamantan-1-yl)-3-(5-(2-(2-ethoxyethoxy) ethoxy)pentyl)urea (AEPU), N-adamantyl-N[']-cyclohexyl urea (ACU), 4-(((1S, 4S)-4-(3-((3S, 5S, 7S)-adamantan-1-yl) ureido)cyclohexyl)oxy)benzoic acid (c-AUCB), 4-(((1R, 4R)-4-(3-((3S, 5S, 7S)-adamantan-1-yl)ureido)cyclohexyl)oxy)benzoic acid (t-AUCB), 4-(((1R, 4R)-4-(3-(4(trifluoromethoxy)phenyl)ureido)cyclohexyl)oxy)benzoic acid (t-TAUCB) and to a lesser extent by 8-(3-((3S, 5S, 7S)-adamantan-1-yl)ureido) octanoic acid (AUOA). Its function is as follows. Bifunctional enzyme. The C-terminal domain has epoxide hydrolase activity and acts on epoxides (alkene oxides, oxiranes) and arene oxides. Plays a role in xenobiotic metabolism by degrading potentially toxic epoxides. Also determines steady-state levels of physiological mediators. The N-terminal domain has lipid phosphatase activity, with the highest activity towards threo-9,10-phosphonooxy-hydroxy-octadecanoic acid, followed by erythro-9,10-phosphonooxy-hydroxy-octadecanoic acid, 12-phosphonooxy-octadec-9Z-enoic acid and 12-phosphonooxy-octadec-9E-enoic acid. The sequence is that of Bifunctional epoxide hydrolase 2 (EPHX2) from Sus scrofa (Pig).